A 78-amino-acid chain; its full sequence is Large ribosomal subunit protein bL28 (78 aa).

A disordered region spans residues 1 to 21; the sequence is MARVCQVTGKGPMTGNNVSHA.

Belongs to the bacterial ribosomal protein bL28 family.

This Bordetella petrii (strain ATCC BAA-461 / DSM 12804 / CCUG 43448) protein is Large ribosomal subunit protein bL28.